The sequence spans 125 residues: E4-ORF1 (125 aa).

Positions 122-125 match the PDZ-binding motif; that stretch reads ATLV.

The protein belongs to the dUTPase family. As to quaternary structure, binds to human MPDZ.

It is found in the host cytoplasm. The catalysed reaction is dUTP + H2O = dUMP + diphosphate + H(+). In terms of biological role, plays a key role in virus oncogenecity in animals. Binds and sequesters human MUPP1/MPDZ protein in the cytoplasm, preventing it from playing a role in cellular proliferation regulation. Induces cell transformation, probably by inactivating MPDZ protein. This Homo sapiens (Human) protein is E4-ORF1 (E4).